The following is a 772-amino-acid chain: Ion-translocating oxidoreductase complex subunit C (772 aa).

4Fe-4S ferredoxin-type domains lie at 369–397 (GEPQ…QQLY) and 407–436 (KATT…VQYF). [4Fe-4S] cluster contacts are provided by Cys-377, Cys-380, Cys-383, Cys-387, Cys-416, Cys-419, Cys-422, and Cys-426. Positions 599-748 (KARKLEQQQA…EPEEQVDPRK (150 aa)) are disordered.

It belongs to the 4Fe4S bacterial-type ferredoxin family. RnfC subfamily. In terms of assembly, the complex is composed of six subunits: RsxA, RsxB, RsxC, RsxD, RsxE and RsxG. The cofactor is [4Fe-4S] cluster.

It localises to the cell inner membrane. Functionally, part of a membrane-bound complex that couples electron transfer with translocation of ions across the membrane. Required to maintain the reduced state of SoxR. This chain is Ion-translocating oxidoreductase complex subunit C, found in Shigella dysenteriae serotype 1 (strain Sd197).